Consider the following 349-residue polypeptide: Ion-translocating oxidoreductase complex subunit D (349 aa).

3 consecutive transmembrane segments (helical) span residues V20–G42, S77–V99, and A124–A144. T185 is subject to FMN phosphoryl threonine. Transmembrane regions (helical) follow at residues S212–L232, W239–L259, A265–T285, A291–I311, and G315–I335.

Belongs to the NqrB/RnfD family. As to quaternary structure, the complex is composed of six subunits: RnfA, RnfB, RnfC, RnfD, RnfE and RnfG. Requires FMN as cofactor.

It is found in the cell inner membrane. Its function is as follows. Part of a membrane-bound complex that couples electron transfer with translocation of ions across the membrane. This is Ion-translocating oxidoreductase complex subunit D from Shewanella baltica (strain OS195).